The chain runs to 363 residues: Two-pore potassium channel 1 (363 aa).

The tract at residues M1–P61 is disordered. Over M1–R78 the chain is Cytoplasmic. Basic residues predominate over residues S31–S42. A helical transmembrane segment spans residues V79–D99. Residues D111–P130 constitute an intramembrane region (pore-forming). The chain crosses the membrane as a helical span at residues L137–A157. At A158–C197 the chain is on the cytoplasmic side. Residues Y198–V218 form a helical membrane-spanning segment. Positions S225–F244 form an intramembrane region, pore-forming. Residues L251–V271 traverse the membrane as a helical segment. Residues A272–R363 are Cytoplasmic-facing. 2 EF-hand domains span residues L288 to K323 and K327 to Q362. The Endoplasmic reticulum release signal signature appears at D296 to E298. Ca(2+)-binding residues include D301, D303, D305, E312, D340, D342, S344, T346, and D351.

It belongs to the two pore domain potassium channel (TC 1.A.1.7) family. In terms of assembly, homodimer. Interacts with GRF1 and GRF6, but only GRF6 modulates the channel activity. In terms of processing, phosphorylation at Ser-42 increases and stabilizes the interaction with 14-3-3 proteins. In terms of tissue distribution, detected in mesophyll cells, guard cells and vascular tissues of the leaves. Expressed in the hilum, where the funiculus is attached during fruit maturation and in the embryo. Also expressed at a lower level in seedlings, root tips and elongation zones, and flowers. Could be detected in mitotically active tissues.

The protein localises to the vacuole membrane. With respect to regulation, could be activated by protein kinase C. Strongly induced by calcium. Blocked by barium, tetraethylammonium (TEA), quinine and quinidine. In terms of biological role, voltage-independent, large conductance and potassium-selective tonoplast ion channel. Regulated by cytoplasmic calcium and pH. Does not mediate slow-vacuolar (SV) ionic currents, but essential to establish VK currents. Has some permeability for Rb(+) and NH(4)(+), but none for Na(+), Cs(+) or Li(+). Involved in intracellular K(+) redistribution and/or K(+) retranslocation between different tissues. This chain is Two-pore potassium channel 1 (TPK1), found in Arabidopsis thaliana (Mouse-ear cress).